The sequence spans 207 residues: MMMTRLETLKNNLQAAFGQDLALTESLGELTLEVAAEQWFSACTKLRTDPALRFESCIDLCGVDYLTWGNGTQPEEKTGPVTRGRYAVVVHLLSIEHNWRLRVRTWAPDDEFPMVSSLLECWPGVNWFEREAFDLYGIVFEGHPDLRRILTDYGFIGHPFRKDFPLSGTVEMRYDPEQKRVIYQPVTIDPREITPRVVREDSYGMGR.

The protein belongs to the complex I 30 kDa subunit family. In terms of assembly, NDH-1 is composed of 14 different subunits. Subunits NuoB, C, D, E, F, and G constitute the peripheral sector of the complex.

The protein localises to the cell inner membrane. It catalyses the reaction a quinone + NADH + 5 H(+)(in) = a quinol + NAD(+) + 4 H(+)(out). Its function is as follows. NDH-1 shuttles electrons from NADH, via FMN and iron-sulfur (Fe-S) centers, to quinones in the respiratory chain. The immediate electron acceptor for the enzyme in this species is believed to be ubiquinone. Couples the redox reaction to proton translocation (for every two electrons transferred, four hydrogen ions are translocated across the cytoplasmic membrane), and thus conserves the redox energy in a proton gradient. This Bordetella pertussis (strain Tohama I / ATCC BAA-589 / NCTC 13251) protein is NADH-quinone oxidoreductase subunit C.